A 330-amino-acid chain; its full sequence is ADP-L-glycero-D-manno-heptose-6-epimerase (330 aa).

Residues Phe-11–Ile-12, Asp-32–Asp-33, Gln-39, Gln-54, Gln-75–Ala-79, and Asn-92 contribute to the NADP(+) site. Tyr-139 (proton acceptor) is an active-site residue. Lys-143 serves as a coordination point for NADP(+). Asn-168 is a binding site for substrate. NADP(+) contacts are provided by Val-169 and Lys-177. Lys-177 (proton acceptor) is an active-site residue. Residues Arg-179, His-186, Phe-200–His-203, Arg-213, and Tyr-292 each bind substrate.

Belongs to the NAD(P)-dependent epimerase/dehydratase family. HldD subfamily. As to quaternary structure, homopentamer. NADP(+) is required as a cofactor.

It catalyses the reaction ADP-D-glycero-beta-D-manno-heptose = ADP-L-glycero-beta-D-manno-heptose. The protein operates within nucleotide-sugar biosynthesis; ADP-L-glycero-beta-D-manno-heptose biosynthesis; ADP-L-glycero-beta-D-manno-heptose from D-glycero-beta-D-manno-heptose 7-phosphate: step 4/4. It functions in the pathway bacterial outer membrane biogenesis; LPS core biosynthesis. In terms of biological role, catalyzes the interconversion between ADP-D-glycero-beta-D-manno-heptose and ADP-L-glycero-beta-D-manno-heptose via an epimerization at carbon 6 of the heptose. The sequence is that of ADP-L-glycero-D-manno-heptose-6-epimerase from Pseudomonas aeruginosa (strain ATCC 15692 / DSM 22644 / CIP 104116 / JCM 14847 / LMG 12228 / 1C / PRS 101 / PAO1).